Reading from the N-terminus, the 347-residue chain is tRNA N6-adenosine threonylcarbamoyltransferase (347 aa).

Positions 110 and 114 each coordinate Fe cation. Substrate is bound by residues 133–137 (VVSGG), D168, G181, D185, and N277. A Fe cation-binding site is contributed by D305.

The protein belongs to the KAE1 / TsaD family. Requires Fe(2+) as cofactor.

The protein localises to the cytoplasm. The enzyme catalyses L-threonylcarbamoyladenylate + adenosine(37) in tRNA = N(6)-L-threonylcarbamoyladenosine(37) in tRNA + AMP + H(+). Functionally, required for the formation of a threonylcarbamoyl group on adenosine at position 37 (t(6)A37) in tRNAs that read codons beginning with adenine. Is involved in the transfer of the threonylcarbamoyl moiety of threonylcarbamoyl-AMP (TC-AMP) to the N6 group of A37, together with TsaE and TsaB. TsaD likely plays a direct catalytic role in this reaction. This is tRNA N6-adenosine threonylcarbamoyltransferase from Kineococcus radiotolerans (strain ATCC BAA-149 / DSM 14245 / SRS30216).